Here is a 349-residue protein sequence, read N- to C-terminus: Ferredoxin--NADP reductase (349 aa).

Residues Asp-43, Gln-51, Tyr-56, Val-96, Phe-131, Asp-295, and Ser-336 each contribute to the FAD site.

It belongs to the ferredoxin--NADP reductase type 2 family. As to quaternary structure, homodimer. FAD serves as cofactor.

It carries out the reaction 2 reduced [2Fe-2S]-[ferredoxin] + NADP(+) + H(+) = 2 oxidized [2Fe-2S]-[ferredoxin] + NADPH. This chain is Ferredoxin--NADP reductase, found in Paraburkholderia phytofirmans (strain DSM 17436 / LMG 22146 / PsJN) (Burkholderia phytofirmans).